Reading from the N-terminus, the 80-residue chain is Cell division activator CedA (80 aa).

The protein belongs to the CedA family.

Its function is as follows. Activates the cell division inhibited by chromosomal DNA over-replication. In Salmonella arizonae (strain ATCC BAA-731 / CDC346-86 / RSK2980), this protein is Cell division activator CedA.